The sequence spans 513 residues: ATP synthase subunit alpha (513 aa).

169 to 176 contributes to the ATP binding site; the sequence is GDRQTGKT.

It belongs to the ATPase alpha/beta chains family. In terms of assembly, F-type ATPases have 2 components, CF(1) - the catalytic core - and CF(0) - the membrane proton channel. CF(1) has five subunits: alpha(3), beta(3), gamma(1), delta(1), epsilon(1). CF(0) has three main subunits: a(1), b(2) and c(9-12). The alpha and beta chains form an alternating ring which encloses part of the gamma chain. CF(1) is attached to CF(0) by a central stalk formed by the gamma and epsilon chains, while a peripheral stalk is formed by the delta and b chains.

It localises to the cell inner membrane. It carries out the reaction ATP + H2O + 4 H(+)(in) = ADP + phosphate + 5 H(+)(out). Its function is as follows. Produces ATP from ADP in the presence of a proton gradient across the membrane. The alpha chain is a regulatory subunit. The sequence is that of ATP synthase subunit alpha from Cronobacter sakazakii (strain ATCC BAA-894) (Enterobacter sakazakii).